We begin with the raw amino-acid sequence, 195 residues long: Holliday junction branch migration complex subunit RuvA (195 aa).

The interval 1–61 (MYEYLDGVVV…ENDQTLYGFK (61 aa)) is domain I. Positions 62–139 (KAEDKELFLN…AVENEVGTLF (78 aa)) are domain II. Residues 139–143 (FDLST) form a flexible linker region. Positions 144–195 (TSNQALDEALEALIALGYSEKEVKKLTKKLSEQTDRTTDQYISSGLKLLMKG) are domain III.

This sequence belongs to the RuvA family. Homotetramer. Forms an RuvA(8)-RuvB(12)-Holliday junction (HJ) complex. HJ DNA is sandwiched between 2 RuvA tetramers; dsDNA enters through RuvA and exits via RuvB. An RuvB hexamer assembles on each DNA strand where it exits the tetramer. Each RuvB hexamer is contacted by two RuvA subunits (via domain III) on 2 adjacent RuvB subunits; this complex drives branch migration. In the full resolvosome a probable DNA-RuvA(4)-RuvB(12)-RuvC(2) complex forms which resolves the HJ.

The protein localises to the cytoplasm. The RuvA-RuvB-RuvC complex processes Holliday junction (HJ) DNA during genetic recombination and DNA repair, while the RuvA-RuvB complex plays an important role in the rescue of blocked DNA replication forks via replication fork reversal (RFR). RuvA specifically binds to HJ cruciform DNA, conferring on it an open structure. The RuvB hexamer acts as an ATP-dependent pump, pulling dsDNA into and through the RuvAB complex. HJ branch migration allows RuvC to scan DNA until it finds its consensus sequence, where it cleaves and resolves the cruciform DNA. This chain is Holliday junction branch migration complex subunit RuvA, found in Pediococcus pentosaceus (strain ATCC 25745 / CCUG 21536 / LMG 10740 / 183-1w).